The chain runs to 323 residues: Calcium homeostasis modulator protein 2 (323 aa).

The Cytoplasmic segment spans residues 1–21; that stretch reads MAALIAENFRFLSLFFKSKDV. Residues 14–39 are central pore; sequence LFFKSKDVMIFNGLVALGTVGSQELF. A helical membrane pass occupies residues 22–43; sequence MIFNGLVALGTVGSQELFSVVA. The Extracellular segment spans residues 44 to 52; that stretch reads FHCPCSPAR. 2 cysteine pairs are disulfide-bonded: C46/C130 and C48/C162. The helical transmembrane segment at 53 to 76 threads the bilayer; sequence NYLYGLAAIGVPALVLFIIGIILN. At 77-101 the chain is on the cytoplasmic side; the sequence is NHTWNLVAECQHRRTKNCSAAPTFL. Residues 102–132 traverse the membrane as a helical segment; it reads LLSSILGRAAVAPVTWSVISLLRGEAYVCAL. The Extracellular portion of the chain corresponds to 133–179; sequence SEFVDPSSLTAREEHFPSAHATEILARFPCKENPDNLSDFREEVSRR. Residues 145–152 form a hemichannel docking region; the sequence is EEHFPSAH. Residues 180–206 traverse the membrane as a helical segment; the sequence is LRYESQLFGWLLIGVVAILVFLTKCLK. Residues 207–323 are Cytoplasmic-facing; it reads HYCSPLSYRQ…DNVEMALLPS (117 aa). The segment at 214 to 251 is intersubunit interaction; sequence YRQEAYWAQYRANEDQLFQRTAEVHSRVLAANNVRRFF.

The protein belongs to the CALHM family. As to quaternary structure, homo-undecamer. Two undecameric hemichannels can assemble in a head-to-head manner to form a gap junction. In terms of tissue distribution, placenta.

The protein localises to the cell membrane. It catalyses the reaction ATP(in) = ATP(out). Inhibited by Ca(2+) and ruthenium red in a voltage-dependent way. Pore-forming subunit of Ca(2+) homeostasis modulator channels. Mediates ATP release from astrocytes and ATP-induced Ca(2+) influx in microglia thus regulating neuronal ATP and Ca(2+) homeostasis, synaptic transmission and neuroinflammatory response. May form intercellular gap junctions. The gating mechanism remains unknown. This Homo sapiens (Human) protein is Calcium homeostasis modulator protein 2.